The sequence spans 155 residues: Egg-lysin (155 aa).

Residues 1 to 18 form the signal peptide; the sequence is MKLLVLCLFAMMATLAVS.

Monomer. Homodimer. Molecules associate into dimers and then rapidly dissociate again. Interacts (as a monomer) with the egg vitelline layer protein VERL (via VERL repeats); each VERL chain can bind multiple copies of lysin. In terms of tissue distribution, sperm (at protein level).

The protein localises to the cytoplasmic vesicle. It is found in the secretory vesicle. It localises to the acrosome lumen. Functionally, creates a 3 um hole in the egg vitelline layer through which the sperm passes. Does not have enzyme activity. Species-specific interaction between the sperm protein lysin and the egg protein VERL exposes a basic surface on lysin that may dissociate the egg vitelline layer via electrostatic repulsion. Plays a role in ensuring species-specific fertilization. In Haliotis corrugata (Pink abalone), this protein is Egg-lysin.